The primary structure comprises 343 residues: Probable dual-specificity RNA methyltransferase RlmN (343 aa).

Glu-83 (proton acceptor) is an active-site residue. Residues Tyr-89–Asp-323 form the Radical SAM core domain. Cys-96 and Cys-328 are oxidised to a cystine. [4Fe-4S] cluster-binding residues include Cys-103, Cys-107, and Cys-110. S-adenosyl-L-methionine is bound by residues Gly-153–Glu-154, Ser-185, Ser-209–His-211, and Asn-285. Cys-328 acts as the S-methylcysteine intermediate in catalysis.

This sequence belongs to the radical SAM superfamily. RlmN family. Requires [4Fe-4S] cluster as cofactor.

It localises to the cytoplasm. The enzyme catalyses adenosine(2503) in 23S rRNA + 2 reduced [2Fe-2S]-[ferredoxin] + 2 S-adenosyl-L-methionine = 2-methyladenosine(2503) in 23S rRNA + 5'-deoxyadenosine + L-methionine + 2 oxidized [2Fe-2S]-[ferredoxin] + S-adenosyl-L-homocysteine. The catalysed reaction is adenosine(37) in tRNA + 2 reduced [2Fe-2S]-[ferredoxin] + 2 S-adenosyl-L-methionine = 2-methyladenosine(37) in tRNA + 5'-deoxyadenosine + L-methionine + 2 oxidized [2Fe-2S]-[ferredoxin] + S-adenosyl-L-homocysteine. In terms of biological role, specifically methylates position 2 of adenine 2503 in 23S rRNA and position 2 of adenine 37 in tRNAs. This is Probable dual-specificity RNA methyltransferase RlmN from Deinococcus deserti (strain DSM 17065 / CIP 109153 / LMG 22923 / VCD115).